A 205-amino-acid polypeptide reads, in one-letter code: Phosphoribosyl-dephospho-CoA transferase (205 aa).

Active-site residues include Asp-134 and Asp-136.

This sequence belongs to the MdcG family.

It catalyses the reaction apo-[malonate decarboxylase ACP] + 2'-(5''-triphospho-alpha-D-ribosyl)-3'-dephospho-CoA = holo-[malonate decarboxylase ACP] + diphosphate. In terms of biological role, transfers 2'-(5-triphosphoribosyl)-3'-dephosphocoenzyme-A to the apo-[acyl-carrier-protein] of the malonate decarboxylase to yield holo-[acyl-carrier-protein]. The sequence is that of Phosphoribosyl-dephospho-CoA transferase from Klebsiella pneumoniae (strain 342).